The chain runs to 217 residues: Small ribosomal subunit protein uS3 (217 aa).

The 69-residue stretch at 38–106 (IRKFINKELA…QVHINIIEIK (69 aa)) folds into the KH type-2 domain.

This sequence belongs to the universal ribosomal protein uS3 family. Part of the 30S ribosomal subunit. Forms a tight complex with proteins S10 and S14.

Binds the lower part of the 30S subunit head. Binds mRNA in the 70S ribosome, positioning it for translation. This Streptococcus equi subsp. equi (strain 4047) protein is Small ribosomal subunit protein uS3.